Here is a 1748-residue protein sequence, read N- to C-terminus: RANBP2-like and GRIP domain-containing protein 1 (1748 aa).

At threonine 14 the chain carries Phosphothreonine. TPR repeat units lie at residues 51–84, 575–608, and 639–672; these read PRAHRFLGLLYELEENTEKAVECYRRSLELNPPQ, QKMGRGLNSSYDQQEYIGRSVHYWKKVLPLLKII, and EDAHITFAILDAVHGNIEDAVTAFESIKSVVSYW. Positions 751 to 796 are disordered; sequence GPLYKNGSLRNADSEIKHSTPSPTKYSLSPSKSYKYSPKTPPRWAE. A compositionally biased stretch (low complexity) spans 769–788; the sequence is STPSPTKYSLSPSKSYKYSP. The 137-residue stretch at 1021 to 1157 folds into the RanBD1 1 domain; that stretch reads HFEPVVQMPE…FEECQRLLLD (137 aa). Disordered stretches follow at residues 1198 to 1233 and 1291 to 1316; these read TKVTEEENKGSGTGAAGASDTTIKPNPENTGPTLEW and AKLNQSGTSVGTDEESDVTQEEERDG. A compositionally biased stretch (polar residues) spans 1220 to 1229; the sequence is IKPNPENTGP. Acidic residues predominate over residues 1302–1314; sequence TDEESDVTQEEER. Residues 1318-1454 enclose the RanBD1 2 domain; it reads YFEPVVPLPD…FDEAKTAQEK (137 aa). The span at 1565-1578 shows a compositional bias: polar residues; that stretch reads NDSETSSVAQSGSE. The disordered stretch occupies residues 1565–1606; sequence NDSETSSVAQSGSESKVEPKKCELSKNSDIEQSSDSKVKNLS. The segment covering 1579-1602 has biased composition (basic and acidic residues); it reads SKVEPKKCELSKNSDIEQSSDSKV. The GRIP domain occupies 1685–1735; the sequence is QEESAANVEHLKNVLLQFIFLKPGSERESLLPVINTMLQLSPEEKGKLAAV.

In Homo sapiens (Human), this protein is RANBP2-like and GRIP domain-containing protein 1 (RGPD1).